We begin with the raw amino-acid sequence, 166 residues long: SPbeta prophage-derived uncharacterized protein YomO (166 aa).

This is SPbeta prophage-derived uncharacterized protein YomO (yomO) from Bacillus subtilis (strain 168).